The primary structure comprises 491 residues: Transcriptional regulatory protein dep1 (491 aa).

2 disordered regions span residues 1 to 74 and 155 to 301; these read MTEN…LPSQ and NSVE…DDEK. The span at 10 to 20 shows a compositional bias: basic and acidic residues; that stretch reads IPHEILPKEPF. Composition is skewed to polar residues over residues 54-63 and 155-171; these read ALSNPETNAN and NSVE…TIVS. Residues 175 to 186 are compositionally biased toward basic and acidic residues; the sequence is KESDFESEEKAT. The span at 187-196 shows a compositional bias: polar residues; sequence NDNNGLIETN. Residue serine 204 is modified to Phosphoserine. Residues 205–215 show a composition bias toward acidic residues; the sequence is SEHEEEEDEES. Composition is skewed to basic and acidic residues over residues 216-227 and 282-301; these read NIERTEDSDHQI and REIA…DDEK. Residue serine 223 is modified to Phosphoserine.

Component of the RPD3C(L) complex.

It localises to the nucleus. Component of the RPD3C(L) histone deacetylase complex (HDAC) responsible for the deacetylation of lysine residues on the N-terminal part of the core histones (H2A, H2B, H3 and H4). Histone deacetylation gives a tag for epigenetic repression and plays an important role in transcriptional regulation, cell cycle progression and developmental events. The chain is Transcriptional regulatory protein dep1 (dep1) from Schizosaccharomyces pombe (strain 972 / ATCC 24843) (Fission yeast).